The sequence spans 154 residues: Endoribonuclease YbeY (154 aa).

Residues H113, H117, and H123 each coordinate Zn(2+).

It belongs to the endoribonuclease YbeY family. Requires Zn(2+) as cofactor.

Its subcellular location is the cytoplasm. Functionally, single strand-specific metallo-endoribonuclease involved in late-stage 70S ribosome quality control and in maturation of the 3' terminus of the 16S rRNA. This chain is Endoribonuclease YbeY, found in Anaplasma marginale (strain Florida).